A 308-amino-acid chain; its full sequence is S-crystallin SL18 (308 aa).

In terms of domain architecture, GST N-terminal spans 2 to 80 (PKYTLYYFNS…YLARQFGFYG (79 aa)). A disordered region spans residues 165–205 (EMRSQDSMVEPPSQKLSPELESQSSLCSERPQCGPPDPMMG). Residues 178-191 (QKLSPELESQSSLC) are compositionally biased toward polar residues. In terms of domain architecture, GST C-terminal spans 185-308 (ESQSSLCSER…YFTLRNYTDF (124 aa)).

The protein belongs to the GST superfamily. Lens.

Its function is as follows. S-crystallins are structural components of squids and octopi eye lens. Contains relatively little if any GST activity. The protein is S-crystallin SL18 of Nototodarus sloanii (Wellington flying squid).